We begin with the raw amino-acid sequence, 479 residues long: 3-isopropylmalate dehydratase large subunit (479 aa).

3 residues coordinate [4Fe-4S] cluster: Cys-350, Cys-415, and Cys-418.

It belongs to the aconitase/IPM isomerase family. LeuC type 1 subfamily. Heterodimer of LeuC and LeuD. [4Fe-4S] cluster serves as cofactor.

It carries out the reaction (2R,3S)-3-isopropylmalate = (2S)-2-isopropylmalate. It participates in amino-acid biosynthesis; L-leucine biosynthesis; L-leucine from 3-methyl-2-oxobutanoate: step 2/4. In terms of biological role, catalyzes the isomerization between 2-isopropylmalate and 3-isopropylmalate, via the formation of 2-isopropylmaleate. The polypeptide is 3-isopropylmalate dehydratase large subunit (Caulobacter vibrioides (strain ATCC 19089 / CIP 103742 / CB 15) (Caulobacter crescentus)).